The chain runs to 259 residues: tRNA pseudouridine synthase A (259 aa).

The active-site Nucleophile is Asp51. Tyr109 is a substrate binding site.

This sequence belongs to the tRNA pseudouridine synthase TruA family. Homodimer.

It catalyses the reaction uridine(38/39/40) in tRNA = pseudouridine(38/39/40) in tRNA. Its function is as follows. Formation of pseudouridine at positions 38, 39 and 40 in the anticodon stem and loop of transfer RNAs. In Nitrosococcus oceani (strain ATCC 19707 / BCRC 17464 / JCM 30415 / NCIMB 11848 / C-107), this protein is tRNA pseudouridine synthase A.